The primary structure comprises 254 residues: 3-deoxy-manno-octulosonate cytidylyltransferase (254 aa).

The protein belongs to the KdsB family.

The protein resides in the cytoplasm. The catalysed reaction is 3-deoxy-alpha-D-manno-oct-2-ulosonate + CTP = CMP-3-deoxy-beta-D-manno-octulosonate + diphosphate. Its pathway is nucleotide-sugar biosynthesis; CMP-3-deoxy-D-manno-octulosonate biosynthesis; CMP-3-deoxy-D-manno-octulosonate from 3-deoxy-D-manno-octulosonate and CTP: step 1/1. The protein operates within bacterial outer membrane biogenesis; lipopolysaccharide biosynthesis. In terms of biological role, activates KDO (a required 8-carbon sugar) for incorporation into bacterial lipopolysaccharide in Gram-negative bacteria. This is 3-deoxy-manno-octulosonate cytidylyltransferase from Pseudomonas fluorescens (strain ATCC BAA-477 / NRRL B-23932 / Pf-5).